A 172-amino-acid polypeptide reads, in one-letter code: MKLQIFNTKLGLLAAKIYWKSWRHLGLSEDEIVSIALHAEHDSKKRYDPKYGLSFETYLKLNGANFIKSSYRSLMNKVDDWIGFKDMKTLEEQNTVSYTPENYLRSVEFREMVHLAFKKAKNEDERQVFALYVKGYKNLEIAKKLNLTTRRVRYLISIFKDHIKVLTKRYGY.

This is an uncharacterized protein from Mycoplasma pneumoniae (strain ATCC 29342 / M129 / Subtype 1) (Mycoplasmoides pneumoniae).